Here is a 443-residue protein sequence, read N- to C-terminus: Threonine/serine transporter TdcC (443 aa).

Helical transmembrane passes span 22 to 42 (TTWT…FFPI), 44 to 64 (AGFG…PIAF), 97 to 117 (GVVI…IYGV), 140 to 160 (FVAL…KDLM), 163 to 183 (VMSY…LSLI), 207 to 227 (ILVT…FSPI), 259 to 279 (ASML…FTLS), 319 to 339 (ASII…LGTL), 366 to 386 (ISMI…PNIL), 389 to 409 (IEAM…MYAI), and 423 to 443 (DNVF…YKLF).

It belongs to the amino acid/polyamine transporter 2 family. SdaC/TdcC subfamily.

The protein resides in the cell inner membrane. It catalyses the reaction L-threonine(in) + H(+)(in) = L-threonine(out) + H(+)(out). The catalysed reaction is L-serine(in) + H(+)(in) = L-serine(out) + H(+)(out). In terms of biological role, involved in the import of threonine and serine into the cell, with the concomitant import of a proton (symport system). The protein is Threonine/serine transporter TdcC of Salmonella paratyphi A (strain ATCC 9150 / SARB42).